The chain runs to 223 residues: Peptidyl-prolyl cis-trans isomerase FKBP16-3, chloroplastic (223 aa).

A chloroplast-targeting transit peptide spans 1–36; it reads MAASSPSLLLPLGSASRNGLTTKNPNSSRYIAARVI. Residues 37–76 constitute a thylakoid transit peptide; sequence ASETREQSCKISNLSSRREAMLLVLGVSGGLSMSSLAAYA. The PPIase FKBP-type domain occupies 124 to 216; sequence GFQVAANYVA…IFDVSLEFIP (93 aa).

Belongs to the FKBP-type PPIase family.

It is found in the plastid. Its subcellular location is the chloroplast thylakoid lumen. It carries out the reaction [protein]-peptidylproline (omega=180) = [protein]-peptidylproline (omega=0). Functionally, PPIases accelerate the folding of proteins. It catalyzes the cis-trans isomerization of proline imidic peptide bonds in oligopeptides. This is Peptidyl-prolyl cis-trans isomerase FKBP16-3, chloroplastic (FKBP16-3) from Arabidopsis thaliana (Mouse-ear cress).